A 244-amino-acid chain; its full sequence is Probable transcriptional regulatory protein CBU_1566 (244 aa).

The protein belongs to the TACO1 family.

It is found in the cytoplasm. The protein is Probable transcriptional regulatory protein CBU_1566 of Coxiella burnetii (strain RSA 493 / Nine Mile phase I).